The following is a 353-amino-acid chain: Photosystem II D2 protein (353 aa).

Thr-2 carries the N-acetylthreonine modification. Thr-2 is modified (phosphothreonine). The chain crosses the membrane as a helical span at residues 41–61 (CAYFALGGWFTGTTFVTSWYT). A chlorophyll a-binding site is contributed by His-118. A helical membrane pass occupies residues 125-141 (GFMLRQFELARSVQLRP). Gln-130 and Asn-143 together coordinate pheophytin a. Residues 153-166 (VFVSVFLIYPLGQS) form a helical membrane-spanning segment. His-198 serves as a coordination point for chlorophyll a. Residues 208–228 (AALLCAIHGATVENTLFEDGD) form a helical membrane-spanning segment. A plastoquinone is bound by residues His-215 and Phe-262. His-215 serves as a coordination point for Fe cation. His-269 contributes to the Fe cation binding site. A helical transmembrane segment spans residues 279–295 (GLWMSALGVVGLALNLR).

It belongs to the reaction center PufL/M/PsbA/D family. As to quaternary structure, PSII is composed of 1 copy each of membrane proteins PsbA, PsbB, PsbC, PsbD, PsbE, PsbF, PsbH, PsbI, PsbJ, PsbK, PsbL, PsbM, PsbT, PsbX, PsbY, PsbZ, Psb30/Ycf12, at least 3 peripheral proteins of the oxygen-evolving complex and a large number of cofactors. It forms dimeric complexes. It depends on The D1/D2 heterodimer binds P680, chlorophylls that are the primary electron donor of PSII, and subsequent electron acceptors. It shares a non-heme iron and each subunit binds pheophytin, quinone, additional chlorophylls, carotenoids and lipids. There is also a Cl(-1) ion associated with D1 and D2, which is required for oxygen evolution. The PSII complex binds additional chlorophylls, carotenoids and specific lipids. as a cofactor.

Its subcellular location is the plastid. It localises to the chloroplast thylakoid membrane. It catalyses the reaction 2 a plastoquinone + 4 hnu + 2 H2O = 2 a plastoquinol + O2. In terms of biological role, photosystem II (PSII) is a light-driven water:plastoquinone oxidoreductase that uses light energy to abstract electrons from H(2)O, generating O(2) and a proton gradient subsequently used for ATP formation. It consists of a core antenna complex that captures photons, and an electron transfer chain that converts photonic excitation into a charge separation. The D1/D2 (PsbA/PsbD) reaction center heterodimer binds P680, the primary electron donor of PSII as well as several subsequent electron acceptors. D2 is needed for assembly of a stable PSII complex. This is Photosystem II D2 protein from Nymphaea alba (White water-lily).